A 307-amino-acid polypeptide reads, in one-letter code: Oxygen-dependent coproporphyrinogen-III oxidase (307 aa).

Residue serine 99 coordinates substrate. Residues histidine 103 and histidine 113 each contribute to the a divalent metal cation site. Residue histidine 113 is the Proton donor of the active site. 115-117 (NVR) contacts substrate. Residues histidine 152 and histidine 182 each contribute to the a divalent metal cation site. Positions 247-282 (YVEFNLVFDRGTLFGLQSGGRTESILMSMPPVVNWR) are important for dimerization. A substrate-binding site is contributed by 265–267 (GGR).

It belongs to the aerobic coproporphyrinogen-III oxidase family. As to quaternary structure, homodimer. The cofactor is a divalent metal cation.

The protein localises to the cytoplasm. It carries out the reaction coproporphyrinogen III + O2 + 2 H(+) = protoporphyrinogen IX + 2 CO2 + 2 H2O. The protein operates within porphyrin-containing compound metabolism; protoporphyrin-IX biosynthesis; protoporphyrinogen-IX from coproporphyrinogen-III (O2 route): step 1/1. Functionally, involved in the heme biosynthesis. Catalyzes the aerobic oxidative decarboxylation of propionate groups of rings A and B of coproporphyrinogen-III to yield the vinyl groups in protoporphyrinogen-IX. The polypeptide is Oxygen-dependent coproporphyrinogen-III oxidase (Paraburkholderia phytofirmans (strain DSM 17436 / LMG 22146 / PsJN) (Burkholderia phytofirmans)).